The primary structure comprises 69 residues: Large ribosomal subunit protein uL29 (69 aa).

The protein belongs to the universal ribosomal protein uL29 family.

This Sulfolobus acidocaldarius (strain ATCC 33909 / DSM 639 / JCM 8929 / NBRC 15157 / NCIMB 11770) protein is Large ribosomal subunit protein uL29.